Consider the following 54-residue polypeptide: Light-harvesting protein B-800/850 alpha chain (54 aa).

At 1 to 14 (MTNGKIWLVVKPTV) the chain is on the cytoplasmic side. A helical transmembrane segment spans residues 15–35 (GVPLFLSAAVIASVVIHAAVL). H31 is a binding site for a bacteriochlorophyll. The Periplasmic segment spans residues 36–54 (TTTTWLPAYYQGSAAVAAE).

This sequence belongs to the antenna complex alpha subunit family. As to quaternary structure, the core complex is formed by different alpha and beta chains, binding bacteriochlorophyll molecules, and arranged most probably in tetrameric structures disposed around the reaction center. The non-pigmented gamma chains may constitute additional components.

It is found in the cell inner membrane. Functionally, antenna complexes are light-harvesting systems, which transfer the excitation energy to the reaction centers. This chain is Light-harvesting protein B-800/850 alpha chain (pucA), found in Cereibacter sphaeroides (Rhodobacter sphaeroides).